We begin with the raw amino-acid sequence, 214 residues long: Thymidylate kinase (214 aa).

An ATP-binding site is contributed by 12–19 (GGEGAGKS).

Belongs to the thymidylate kinase family.

The enzyme catalyses dTMP + ATP = dTDP + ADP. In terms of biological role, phosphorylation of dTMP to form dTDP in both de novo and salvage pathways of dTTP synthesis. The sequence is that of Thymidylate kinase from Gluconobacter oxydans (strain 621H) (Gluconobacter suboxydans).